The primary structure comprises 222 residues: Germin-like protein subfamily 1 member 4 (222 aa).

The N-terminal stretch at 1–24 (MEGLLQFLLAKIILLALASSFVYC) is a signal peptide. Cys34 and Cys50 are joined by a disulfide. Asn38 carries an N-linked (GlcNAc...) asparagine glycan. Residues 64–215 (SGLNVPGNTI…AFALDYNKVK (152 aa)) enclose the Cupin type-1 domain. Mn(2+) is bound by residues His112 and His114. N-linked (GlcNAc...) asparagine glycosylation occurs at Asn139. A Mn(2+)-binding site is contributed by His161.

Belongs to the germin family. Oligomer (believed to be a pentamer but probably hexamer).

The protein resides in the secreted. It is found in the extracellular space. Its subcellular location is the apoplast. Its function is as follows. May play a role in plant defense. Probably has no oxalate oxidase activity even if the active site is conserved. The chain is Germin-like protein subfamily 1 member 4 from Arabidopsis thaliana (Mouse-ear cress).